Reading from the N-terminus, the 235-residue chain is tRNA (adenine(37)-N6)-methyltransferase (235 aa).

Positions 6 to 147 (FEQIGVIRSP…YLPFAESLPD (142 aa)) constitute a TsaA-like domain. S-adenosyl-L-methionine-binding positions include 23-25 (PRQ), 64-65 (HQ), arginine 92, and 127-130 (VDGT).

The protein belongs to the tRNA methyltransferase O family. As to quaternary structure, homodimer.

The catalysed reaction is N(6)-L-threonylcarbamoyladenosine(37) in tRNA + S-adenosyl-L-methionine = N(6)-methyl,N(6)-L-threonylcarbamoyladenosine(37) in tRNA + S-adenosyl-L-homocysteine + H(+). S-adenosyl-L-methionine-dependent methyltransferase responsible for the addition of the methyl group in the formation of N6-methyl-N6-threonylcarbamoyladenosine at position 37 (m(6)t(6)A37) of the tRNA anticodon loop of tRNA(Thr)(GGU) that read codons starting with adenosine. The methyl group of m(6)t(6)A37 appears to slightly improve the efficiency of the tRNA decoding ability. The chain is tRNA (adenine(37)-N6)-methyltransferase from Escherichia coli (strain K12).